A 428-amino-acid chain; its full sequence is C4-dicarboxylate transport protein (428 aa).

Transmembrane regions (helical) follow at residues 4–24 (SLFK…ILLG), 44–64 (LIKM…IAGM), 76–96 (VALL…LIIV), 142–162 (IGAF…LFGF), 184–204 (VIFG…FGAM), 222–242 (LIIC…GTIA), 289–309 (VVGL…SIYL), 326–346 (IFHQ…AAGV), and 352–372 (IVLA…LALI).

This sequence belongs to the dicarboxylate/amino acid:cation symporter (DAACS) (TC 2.A.23) family.

The protein localises to the cell inner membrane. Its function is as follows. Responsible for the transport of dicarboxylates such as succinate, fumarate, and malate from the periplasm across the membrane. The protein is C4-dicarboxylate transport protein of Salmonella gallinarum (strain 287/91 / NCTC 13346).